Consider the following 257-residue polypeptide: Inositol diphosphatase DSP2 (257 aa).

Residues 66 to 251 form the Tyrosine-protein phosphatase domain; that stretch reads NFSMVDNGIF…VSGLKHTPMS (186 aa). The 1D-myo-inositol hexakisphosphate site is built by I168 and K172. Residue C192 is the Phosphocysteine intermediate of the active site.

This sequence belongs to the protein-tyrosine phosphatase family. Atypical dual-specificity phosphatase Siw14-like subfamily. In terms of tissue distribution, expressed in roots, leaves, stems, flowers and siliques.

The catalysed reaction is 5-diphospho-1D-myo-inositol 1,2,3,4,6-pentakisphosphate + H2O = 1D-myo-inositol hexakisphosphate + phosphate + H(+). It catalyses the reaction 1,5-bis(diphospho)-1D-myo-inositol 2,3,4,6-tetrakisphosphate + H2O = 1-diphospho-1D-myo-inositol 2,3,4,5,6-pentakisphosphate + phosphate + 2 H(+). It carries out the reaction 3,5-bis(diphospho)-1D-myo-inositol 1,2,4,6-tetrakisphosphate + H2O = 3-diphospho-1D-myo-inositol 1,2,4,5,6-pentakisphosphate + phosphate + 2 H(+). The enzyme catalyses 6-diphospho-1D-myo-inositol pentakisphosphate + H2O = 1D-myo-inositol hexakisphosphate + phosphate + H(+). Its function is as follows. Cleaves the beta-phosphate at the 5-position of soluble inositol pyrophosphates. Has highest activity on 5-diphosphoinositol 1,2,3,4,6-pentakisphosphate (5-InsP(7)), 1,5-bis-diphosphoinositol 2,3,4,6-tetrakisphosphate (1,5-InsP(8)) and 3,5-InsP(8). Possesses phosphotyrosine phosphatase activity in vitro. Dephosphorylates the phosphoinositides PI(3,5)P2. Hydrolyzes para-nitrophenyl phosphate and O-methylfluorescein phosphate in vitro. This chain is Inositol diphosphatase DSP2, found in Arabidopsis thaliana (Mouse-ear cress).